The following is a 259-amino-acid chain: 3-deoxy-manno-octulosonate cytidylyltransferase (259 aa).

The protein belongs to the KdsB family.

The protein resides in the cytoplasm. It catalyses the reaction 3-deoxy-alpha-D-manno-oct-2-ulosonate + CTP = CMP-3-deoxy-beta-D-manno-octulosonate + diphosphate. The protein operates within nucleotide-sugar biosynthesis; CMP-3-deoxy-D-manno-octulosonate biosynthesis; CMP-3-deoxy-D-manno-octulosonate from 3-deoxy-D-manno-octulosonate and CTP: step 1/1. It participates in bacterial outer membrane biogenesis; lipopolysaccharide biosynthesis. Its function is as follows. Activates KDO (a required 8-carbon sugar) for incorporation into bacterial lipopolysaccharide in Gram-negative bacteria. In Xanthomonas axonopodis pv. citri (strain 306), this protein is 3-deoxy-manno-octulosonate cytidylyltransferase.